Consider the following 704-residue polypeptide: Phosphatidylinositol-3,5-bisphosphate 3-phosphatase MTMR8 (704 aa).

One can recognise a Myotubularin phosphatase domain in the interval 126-500; the sequence is GWKLIDPISD…YNIQFWCGMY (375 aa). A 1,2-diacyl-sn-glycero-3-phospho-(1D-myo-inositol-3,5-bisphosphate)-binding residues include Asn-250, Asn-275, and Ile-276. The a 1,2-diacyl-sn-glycero-3-phospho-(1D-myo-inositol-3-phosphate) site is built by Asn-250, Asn-275, and Ile-276. Cys-338 acts as the Phosphocysteine intermediate in catalysis. Residues Ser-339, Asp-340, Gly-341, Trp-342, Asp-343, Arg-344, Lys-380, and Arg-384 each coordinate a 1,2-diacyl-sn-glycero-3-phospho-(1D-myo-inositol-3,5-bisphosphate). Residues Ser-339, Asp-340, Gly-341, Trp-342, Asp-343, and Arg-344 each coordinate a 1,2-diacyl-sn-glycero-3-phospho-(1D-myo-inositol-3-phosphate). 2 residues coordinate phosphate: Ser-339 and Asp-340. Positions 342, 343, and 344 each coordinate phosphate. Arg-384 provides a ligand contact to a 1,2-diacyl-sn-glycero-3-phospho-(1D-myo-inositol-3-phosphate). The stretch at 515–541 forms a coiled coil; it reads ESLLEIKKQRAMLETDVHELEKKLKVR.

This sequence belongs to the protein-tyrosine phosphatase family. Non-receptor class myotubularin subfamily. As to quaternary structure, homodimer. Heterodimer with MTMR9.

The protein resides in the nucleus envelope. The enzyme catalyses a 1,2-diacyl-sn-glycero-3-phospho-(1D-myo-inositol-3,5-bisphosphate) + H2O = a 1,2-diacyl-sn-glycero-3-phospho-(1D-myo-inositol-5-phosphate) + phosphate. The catalysed reaction is a 1,2-diacyl-sn-glycero-3-phospho-(1D-myo-inositol-3-phosphate) + H2O = a 1,2-diacyl-sn-glycero-3-phospho-(1D-myo-inositol) + phosphate. It carries out the reaction 1,2-dioctanoyl-sn-glycero-3-phospho-(1D-myo-inositol-3,5-bisphosphate) + H2O = 1,2-dioctanoyl-sn-glycero-3-phospho-(1D-myo-inositol-5-phosphate) + phosphate. With respect to regulation, interaction with MTMR9 increases phosphatase activity. Its function is as follows. Lipid phosphatase that specifically dephosphorylates the D-3 position of phosphatidylinositol 3-phosphate and phosphatidylinositol 3,5-bisphosphate, generating phosphatidylinositol and phosphatidylinositol 5-phosphate. In complex with MTMR9, negatively regulates autophagy. The chain is Phosphatidylinositol-3,5-bisphosphate 3-phosphatase MTMR8 from Homo sapiens (Human).